Reading from the N-terminus, the 498-residue chain is GPI mannosyltransferase 4 (498 aa).

The chain crosses the membrane as a helical span at residues 11–31 (FYLLTIVFRFVFTLSDSYIHP). A glycan (N-linked (GlcNAc...) asparagine) is linked at Asn47. A helical transmembrane segment spans residues 63–83 (SLAPLYFIYGPLLYFIKFFKL). Asn84 carries an N-linked (GlcNAc...) asparagine glycan. Helical transmembrane passes span 96 to 116 (LQIS…MLPS), 140 to 160 (LFSN…IDDL), 189 to 209 (LGIF…WFVM), 222 to 242 (LVMG…ILFG), 247 to 267 (VVAE…NLLY), 282 to 302 (YYTH…IFFV), 310 to 330 (TPFL…HQEL), 332 to 348 (FLIP…DFTL), and 350 to 370 (WVQP…SILM). N-linked (GlcNAc...) asparagine glycosylation is found at Asn408 and Asn473.

This sequence belongs to the glycosyltransferase 22 family. PIGZ subfamily.

It localises to the endoplasmic reticulum membrane. The protein operates within glycolipid biosynthesis; glycosylphosphatidylinositol-anchor biosynthesis. Functionally, alpha-1,2-mannosyltransferase involved in glycosylphosphatidylinositol-anchor biosynthesis. Transfers a fourth mannose to trimannosyl-GPIs during GPI precursor assembly. The presence of a fourth mannose in GPI is essential in fungi. The polypeptide is GPI mannosyltransferase 4 (SMP3) (Candida albicans (strain SC5314 / ATCC MYA-2876) (Yeast)).